The following is a 365-amino-acid chain: tRNA (guanine(6)-N2)-methyltransferase (365 aa).

Residues 69–182 (NENSRLLHRV…KDVFFLGIDT (114 aa)) enclose the THUMP domain. S-adenosyl-L-methionine contacts are provided by residues 198 to 202 (HPAHL), 228 to 230 (SGT), glutamate 248, 276 to 277 (DA), and asparagine 293.

This sequence belongs to the methyltransferase superfamily. As to quaternary structure, monomer in solution.

Its subcellular location is the cytoplasm. The catalysed reaction is guanosine(6) in tRNA + S-adenosyl-L-methionine = N(2)-methylguanosine(6) in tRNA + S-adenosyl-L-homocysteine + H(+). Its function is as follows. S-adenosyl-L-methionine-dependent methyltransferase that catalyzes the methylation of the guanosine nucleotide at position 6 (m2G6) in tRNA(Phe). This Pyrococcus furiosus (strain ATCC 43587 / DSM 3638 / JCM 8422 / Vc1) protein is tRNA (guanine(6)-N2)-methyltransferase.